The primary structure comprises 239 residues: 1-(5-phosphoribosyl)-5-[(5-phosphoribosylamino)methylideneamino] imidazole-4-carboxamide isomerase (239 aa).

Asp-9 serves as the catalytic Proton acceptor. Asp-131 functions as the Proton donor in the catalytic mechanism.

Belongs to the HisA/HisF family.

The protein resides in the cytoplasm. It carries out the reaction 1-(5-phospho-beta-D-ribosyl)-5-[(5-phospho-beta-D-ribosylamino)methylideneamino]imidazole-4-carboxamide = 5-[(5-phospho-1-deoxy-D-ribulos-1-ylimino)methylamino]-1-(5-phospho-beta-D-ribosyl)imidazole-4-carboxamide. It functions in the pathway amino-acid biosynthesis; L-histidine biosynthesis; L-histidine from 5-phospho-alpha-D-ribose 1-diphosphate: step 4/9. The protein is 1-(5-phosphoribosyl)-5-[(5-phosphoribosylamino)methylideneamino] imidazole-4-carboxamide isomerase of Bacteroides fragilis (strain ATCC 25285 / DSM 2151 / CCUG 4856 / JCM 11019 / LMG 10263 / NCTC 9343 / Onslow / VPI 2553 / EN-2).